A 93-amino-acid chain; its full sequence is Defensin-like protein 229 (93 aa).

An N-terminal signal peptide occupies residues 1–19 (MKSTTLFMVSCVLIFCVLS). Intrachain disulfides connect cysteine 38-cysteine 93, cysteine 48-cysteine 72, cysteine 56-cysteine 84, and cysteine 70-cysteine 86.

The protein belongs to the DEFL family. In terms of tissue distribution, flower buds.

It localises to the secreted. This Arabidopsis thaliana (Mouse-ear cress) protein is Defensin-like protein 229 (SCRL27).